A 582-amino-acid polypeptide reads, in one-letter code: ATP-dependent lipid A-core flippase (582 aa).

5 consecutive transmembrane segments (helical) span residues 25-45, 69-89, 137-159, 253-273, and 275-295; these read AGLIVAAIALILNAASDTFML, LAVIGLMVVRGVTGFVSSYCI, ASSSSALVTVVREGASIIGLFIM, PIIQLIASFALALVLYAASFP, and VMETLTAGTITVVFSAMIALM. The ABC transmembrane type-1 domain maps to 28–310; the sequence is IVAAIALILN…LTNVNTQFQR (283 aa). The ABC transporter domain maps to 342–578; sequence IEFRHVTFYY…QGVYAQLNRM (237 aa). 376-383 is a binding site for ATP; sequence GRSGSGKS.

The protein belongs to the ABC transporter superfamily. Lipid exporter (TC 3.A.1.106) family. Homodimer.

Its subcellular location is the cell inner membrane. It catalyses the reaction ATP + H2O + lipid A-core oligosaccharideSide 1 = ADP + phosphate + lipid A-core oligosaccharideSide 2.. In terms of biological role, involved in lipopolysaccharide (LPS) biosynthesis. Translocates lipid A-core from the inner to the outer leaflet of the inner membrane. Transmembrane domains (TMD) form a pore in the inner membrane and the ATP-binding domain (NBD) is responsible for energy generation. The protein is ATP-dependent lipid A-core flippase of Yersinia pestis bv. Antiqua (strain Antiqua).